The chain runs to 675 residues: DNA gyrase subunit B (675 aa).

A Toprim domain is found at 453–567 (SELYVVEGDS…NGHVFLAQPP (115 aa)). Residues glutamate 459, aspartate 532, and aspartate 534 each contribute to the Mg(2+) site.

The protein belongs to the type II topoisomerase GyrB family. Heterotetramer, composed of two GyrA and two GyrB chains. In the heterotetramer, GyrA contains the active site tyrosine that forms a transient covalent intermediate with DNA, while GyrB binds cofactors and catalyzes ATP hydrolysis. Mg(2+) is required as a cofactor. Mn(2+) serves as cofactor. It depends on Ca(2+) as a cofactor.

The protein localises to the cytoplasm. It carries out the reaction ATP-dependent breakage, passage and rejoining of double-stranded DNA.. A type II topoisomerase that negatively supercoils closed circular double-stranded (ds) DNA in an ATP-dependent manner to modulate DNA topology and maintain chromosomes in an underwound state. Negative supercoiling favors strand separation, and DNA replication, transcription, recombination and repair, all of which involve strand separation. Also able to catalyze the interconversion of other topological isomers of dsDNA rings, including catenanes and knotted rings. Type II topoisomerases break and join 2 DNA strands simultaneously in an ATP-dependent manner. The chain is DNA gyrase subunit B from Mycobacterium tuberculosis (strain ATCC 25177 / H37Ra).